The following is a 244-amino-acid chain: Mast cell protease 2 (244 aa).

An N-terminal signal peptide occupies residues 1 to 18; sequence MQALLFLMALLLPSGAGA. A propeptide spans 19–20 (activation peptide); sequence EE. Positions 21–242 constitute a Peptidase S1 domain; sequence IIGGVEAKPH…YLPWIYKVLK (222 aa). The N-linked (GlcNAc...) asparagine glycan is linked to Asn44. An intrachain disulfide couples Cys50 to Cys66. Active-site charge relay system residues include His65 and Asp109. Intrachain disulfides connect Cys143–Cys208 and Cys174–Cys187. The active-site Charge relay system is the Ser202.

The protein belongs to the peptidase S1 family. Granzyme subfamily. Mucosal mast cells.

The sequence is that of Mast cell protease 2 (Mcpt2) from Mus musculus (Mouse).